Here is a 149-residue protein sequence, read N- to C-terminus: Large-conductance mechanosensitive channel (149 aa).

3 helical membrane-spanning segments follow: residues 10–30 (FALK…GAFA), 41–61 (IMPI…MFLI), and 87–107 (GSFI…FMMV).

The protein belongs to the MscL family. As to quaternary structure, homopentamer.

It localises to the cell inner membrane. Functionally, channel that opens in response to stretch forces in the membrane lipid bilayer. May participate in the regulation of osmotic pressure changes within the cell. This is Large-conductance mechanosensitive channel from Psychrobacter cryohalolentis (strain ATCC BAA-1226 / DSM 17306 / VKM B-2378 / K5).